The chain runs to 302 residues: m7GpppN-mRNA hydrolase NUDT17 (302 aa).

The region spanning Gly-89–Pro-237 is the Nudix hydrolase domain. A Nudix box motif is present at residues Gly-128–Gly-149. Mg(2+) contacts are provided by Glu-143 and Glu-147.

It belongs to the Nudix hydrolase family. Mg(2+) serves as cofactor. It depends on Mn(2+) as a cofactor.

It carries out the reaction a 5'-end (N(7)-methyl 5'-triphosphoguanosine)-ribonucleoside in mRNA + H2O = N(7)-methyl-GDP + a 5'-end phospho-ribonucleoside in mRNA + 2 H(+). Functionally, acts as a decapping enzyme capable of hydrolyzing monomethylated capped RNAs (in vitro). Hydrolyzes monomethylated capped RNA after alpha and beta phosphates to form N(7)-methyl-GDP. Shows low activity towards unmethylated capped RNA. The chain is m7GpppN-mRNA hydrolase NUDT17 (NUDT17) from Bos taurus (Bovine).